Here is a 113-residue protein sequence, read N- to C-terminus: UPF0342 protein SPy_0811/M5005_Spy0626 (113 aa).

This sequence belongs to the UPF0342 family.

This chain is UPF0342 protein SPy_0811/M5005_Spy0626, found in Streptococcus pyogenes serotype M1.